The chain runs to 73 residues: Large ribosomal subunit protein uL29 (73 aa).

The protein belongs to the universal ribosomal protein uL29 family.

The sequence is that of Large ribosomal subunit protein uL29 (rpmC) from Aquifex aeolicus (strain VF5).